The primary structure comprises 283 residues: Acetylglutamate kinase (283 aa).

Residues 63–64, Arg85, and Asn178 each bind substrate; that span reads GG.

This sequence belongs to the acetylglutamate kinase family. ArgB subfamily.

It is found in the plastid. The protein resides in the chloroplast. The enzyme catalyses N-acetyl-L-glutamate + ATP = N-acetyl-L-glutamyl 5-phosphate + ADP. It participates in amino-acid biosynthesis; L-arginine biosynthesis; N(2)-acetyl-L-ornithine from L-glutamate: step 2/4. Its function is as follows. Catalyzes the ATP-dependent phosphorylation of N-acetyl-L-glutamate. The sequence is that of Acetylglutamate kinase from Porphyra purpurea (Red seaweed).